Consider the following 138-residue polypeptide: Small ribosomal subunit protein uS11c (138 aa).

Residues 1-23 (MAKPILRIGSRKNTRSGSRKNVR) are disordered. A compositionally biased stretch (basic residues) spans 9–23 (GSRKNTRSGSRKNVR).

This sequence belongs to the universal ribosomal protein uS11 family. As to quaternary structure, part of the 30S ribosomal subunit.

The protein localises to the plastid. Its subcellular location is the chloroplast. The sequence is that of Small ribosomal subunit protein uS11c from Barbarea verna (Land cress).